A 172-amino-acid polypeptide reads, in one-letter code: MAKKVAIILADEFEDIELTSPKEALENAGFETEVIGDTANHEVVGKHGEKVTVDVSIADAKPENYDALLIPGGFSPDHLRGDEEGRYGTFAKYFTKNDVPTFAICHGPLVLVDTDDLKGRTITGVINVRKDLSNAGANVVDESVVVDNNIVTSRVPDDLDDFNREIVKKLEA.

A PfpI endopeptidase domain is found at 3–171 (KKVAIILADE…FNREIVKKLE (169 aa)).

Belongs to the peptidase C56 family.

This is an uncharacterized protein from Staphylococcus epidermidis (strain ATCC 35984 / DSM 28319 / BCRC 17069 / CCUG 31568 / BM 3577 / RP62A).